The primary structure comprises 368 residues: 3-dehydroquinate synthase (368 aa).

This sequence belongs to the archaeal-type DHQ synthase family.

It catalyses the reaction 2-amino-2,3,7-trideoxy-D-lyxo-hept-6-ulosonate + NAD(+) + H2O = 3-dehydroquinate + NH4(+) + NADH + H(+). Functionally, catalyzes the oxidative deamination and cyclization of 2-amino-3,7-dideoxy-D-threo-hept-6-ulosonic acid (ADH) to yield 3-dehydroquinate (DHQ), which is fed into the canonical shikimic pathway of aromatic amino acid biosynthesis. This is 3-dehydroquinate synthase from Methanobrevibacter smithii (strain ATCC 35061 / DSM 861 / OCM 144 / PS).